Here is a 1270-residue protein sequence, read N- to C-terminus: Nuclear exosome regulator NRDE2 (1270 aa).

Disordered stretches follow at residues 1–22 (MFRA…ENPD) and 119–209 (SVKS…HTLM). Positions 119 to 135 (SVKSLNGCQDPPETSQQ) are enriched in polar residues. The span at 164 to 184 (QRSRSREKKRRKKERRRKRSS) shows a compositional bias: basic residues. Residues 192–204 (RSRDRSSRARDTS) show a composition bias toward basic and acidic residues.

It belongs to the NRDE2 family. In terms of assembly, interacts with nrde-3.

It is found in the nucleus. The protein localises to the nucleus speckle. Its subcellular location is the nucleolus. Functionally, protein of the nuclear speckles that regulates RNA exosomal degradation. Involved in short interfering RNAs-mediated silencing in nuclei. Functions with nrde-3 in the nuclear RNA-mediated gene silencing (RNAi) pathway to regulate gene expression via inhibition of RNA polymerases I and II during the elongation phase of transcription. Required for exogenous RNAi-induced H3K27 methylation. The chain is Nuclear exosome regulator NRDE2 (nrde-2) from Caenorhabditis elegans.